Here is a 139-residue protein sequence, read N- to C-terminus: D-ribose pyranase (139 aa).

His20 (proton donor) is an active-site residue. Substrate-binding positions include Asp28, His106, and 128–130 (YAN).

It belongs to the RbsD / FucU family. RbsD subfamily. In terms of assembly, homodecamer.

It is found in the cytoplasm. The catalysed reaction is beta-D-ribopyranose = beta-D-ribofuranose. Its pathway is carbohydrate metabolism; D-ribose degradation; D-ribose 5-phosphate from beta-D-ribopyranose: step 1/2. Functionally, catalyzes the interconversion of beta-pyran and beta-furan forms of D-ribose. The polypeptide is D-ribose pyranase (Vibrio vulnificus (strain CMCP6)).